The primary structure comprises 273 residues: Glutamate 5-kinase (273 aa).

Lysine 15 provides a ligand contact to ATP. Serine 55, aspartate 142, and asparagine 158 together coordinate substrate. ATP contacts are provided by residues 178-179 and 220-226; these read SD and TGGMLSK.

The protein belongs to the glutamate 5-kinase family.

It is found in the cytoplasm. It catalyses the reaction L-glutamate + ATP = L-glutamyl 5-phosphate + ADP. It functions in the pathway amino-acid biosynthesis; L-proline biosynthesis; L-glutamate 5-semialdehyde from L-glutamate: step 1/2. In terms of biological role, catalyzes the transfer of a phosphate group to glutamate to form L-glutamate 5-phosphate. In Streptococcus pyogenes serotype M4 (strain MGAS10750), this protein is Glutamate 5-kinase.